A 1147-amino-acid polypeptide reads, in one-letter code: Lon protease homolog 2, peroxisomal (1147 aa).

Positions 20 to 348 (LPTYKLDSNL…EVNRMLESMI (329 aa)) constitute a Lon N-terminal domain. 2 disordered regions span residues 395–444 (KPDK…DDDD) and 561–626 (KIES…SLTT). The segment covering 427–444 (DGNESNDEYDDDEDDDDD) has biased composition (acidic residues). 2 stretches are compositionally biased toward basic and acidic residues: residues 561-574 (KIES…KKNE) and 582-597 (KNDK…RSDD). ATP is bound at residue 651–658 (GPPGTGKT). Residues 903 to 1131 (SAKCGVVNGL…WDVIKAVWGD (229 aa)) enclose the Lon proteolytic domain. Active-site residues include Ser1006 and Lys1049.

The protein belongs to the peptidase S16 family.

Its subcellular location is the peroxisome matrix. The catalysed reaction is Hydrolysis of proteins in presence of ATP.. In terms of biological role, ATP-dependent serine protease that mediates the selective degradation of misfolded and unassembled polypeptides in the peroxisomal matrix. Necessary for type 2 peroxisome targeting signal (PTS2)-containing protein processing and facilitates peroxisome matrix protein import. The chain is Lon protease homolog 2, peroxisomal from Debaryomyces hansenii (strain ATCC 36239 / CBS 767 / BCRC 21394 / JCM 1990 / NBRC 0083 / IGC 2968) (Yeast).